The sequence spans 692 residues: Alpha-amylase SusG (692 aa).

Residues 1–22 (MNKHLHFLSLLWLSMLMAFMTA) form the signal peptide. Residue cysteine 23 is the site of N-palmitoyl cysteine attachment. The S-diacylglycerol cysteine moiety is linked to residue cysteine 23. Positions 73, 75, 77, 79, and 81 each coordinate Mg(2+). Position 153 (asparagine 153) interacts with Ca(2+). 3 starch binding regions span residues histidine 154, 260–263 (YYGE), and 330–333 (NIMF). Aspartate 352 is a binding site for Ca(2+). A starch binding region spans residues 386-392 (RLDAVKH). Catalysis depends on aspartate 388, which acts as the Nucleophile. Histidine 392 contributes to the Ca(2+) binding site. The active-site Proton donor is the glutamate 431. 2 regions of interest (starch binding) are found at residues aspartate 437 and arginine 457.

Belongs to the glycosyl hydrolase 13 family. As to quaternary structure, monomer. The cofactor is Ca(2+).

The protein resides in the cell outer membrane. It catalyses the reaction Endohydrolysis of (1-&gt;4)-alpha-D-glucosidic linkages in polysaccharides containing three or more (1-&gt;4)-alpha-linked D-glucose units.. It functions in the pathway glycan degradation; starch degradation. In terms of biological role, alpha-amylase that cleaves starch into oligosaccharides before internalization for degradation, the first step in starch degradation. The protein is Alpha-amylase SusG (susG) of Bacteroides thetaiotaomicron (strain ATCC 29148 / DSM 2079 / JCM 5827 / CCUG 10774 / NCTC 10582 / VPI-5482 / E50).